Reading from the N-terminus, the 327-residue chain is Zinc transport protein ZntB (327 aa).

The Cytoplasmic portion of the chain corresponds to 1–271 (METIYGSSLK…AMNRRTYTMS (271 aa)). A helical membrane pass occupies residues 272–292 (LLAMIFLPTTFLTGLFGVNLG). At 293–300 (GIPGNEYY) the chain is on the periplasmic side. Residues 301 to 321 (LGFAIFCLLLFGLVLFVAWWL) traverse the membrane as a helical segment. At 322–327 (KKSKWL) the chain is on the cytoplasmic side.

This sequence belongs to the CorA metal ion transporter (MIT) (TC 1.A.35) family.

The protein localises to the cell inner membrane. It catalyses the reaction Zn(2+)(out) + H(+)(out) = Zn(2+)(in) + H(+)(in). Functionally, zinc transporter. Acts as a Zn(2+):proton symporter, which likely mediates zinc ion uptake. This Photorhabdus laumondii subsp. laumondii (strain DSM 15139 / CIP 105565 / TT01) (Photorhabdus luminescens subsp. laumondii) protein is Zinc transport protein ZntB.